The primary structure comprises 275 residues: Formamidopyrimidine-DNA glycosylase (275 aa).

P2 (schiff-base intermediate with DNA) is an active-site residue. The Proton donor role is filled by E3. K58 functions as the Proton donor; for beta-elimination activity in the catalytic mechanism. H91 and R110 together coordinate DNA. The FPG-type zinc finger occupies 238–272; that stretch reads QVYGQTGKPCPRCGQAIVKLKVGGRGTHICPKCQK. R262 acts as the Proton donor; for delta-elimination activity in catalysis.

Belongs to the FPG family. As to quaternary structure, monomer. Zn(2+) serves as cofactor.

It carries out the reaction Hydrolysis of DNA containing ring-opened 7-methylguanine residues, releasing 2,6-diamino-4-hydroxy-5-(N-methyl)formamidopyrimidine.. It catalyses the reaction 2'-deoxyribonucleotide-(2'-deoxyribose 5'-phosphate)-2'-deoxyribonucleotide-DNA = a 3'-end 2'-deoxyribonucleotide-(2,3-dehydro-2,3-deoxyribose 5'-phosphate)-DNA + a 5'-end 5'-phospho-2'-deoxyribonucleoside-DNA + H(+). Involved in base excision repair of DNA damaged by oxidation or by mutagenic agents. Acts as a DNA glycosylase that recognizes and removes damaged bases. Has a preference for oxidized purines, such as 7,8-dihydro-8-oxoguanine (8-oxoG). Has AP (apurinic/apyrimidinic) lyase activity and introduces nicks in the DNA strand. Cleaves the DNA backbone by beta-delta elimination to generate a single-strand break at the site of the removed base with both 3'- and 5'-phosphates. The chain is Formamidopyrimidine-DNA glycosylase from Streptococcus pyogenes serotype M6 (strain ATCC BAA-946 / MGAS10394).